The sequence spans 381 residues: Succinyl-diaminopimelate desuccinylase (381 aa).

His-69 provides a ligand contact to Zn(2+). Asp-71 is an active-site residue. Asp-103 provides a ligand contact to Zn(2+). Glu-137 serves as the catalytic Proton acceptor. 3 residues coordinate Zn(2+): Glu-138, Glu-166, and His-355.

This sequence belongs to the peptidase M20A family. DapE subfamily. As to quaternary structure, homodimer. Requires Zn(2+) as cofactor. Co(2+) is required as a cofactor.

It catalyses the reaction N-succinyl-(2S,6S)-2,6-diaminopimelate + H2O = (2S,6S)-2,6-diaminopimelate + succinate. It participates in amino-acid biosynthesis; L-lysine biosynthesis via DAP pathway; LL-2,6-diaminopimelate from (S)-tetrahydrodipicolinate (succinylase route): step 3/3. Catalyzes the hydrolysis of N-succinyl-L,L-diaminopimelic acid (SDAP), forming succinate and LL-2,6-diaminopimelate (DAP), an intermediate involved in the bacterial biosynthesis of lysine and meso-diaminopimelic acid, an essential component of bacterial cell walls. This Rickettsia massiliae (strain Mtu5) protein is Succinyl-diaminopimelate desuccinylase.